Reading from the N-terminus, the 235-residue chain is MSGFQFKQFFIAHDCCAMKVNTDGILLGSIADPSNARHILDLGTGTGLIAIMLAQRTASAQITALELEENAFHQAQENAQRCPWNNRIDVLQADIMTWKSTKKFDLIVSNPPYFEHSLASRNKQRDLARAVTYSHFDWLKQSQQWLTPNGRISFILPCDAGKKLLEQSHLLGLYCIEYWEICTKVGLSPKRVILTFSPQYAEMALHTLTIYDENQRYTADFTQFTEIFYLKVNSK.

This sequence belongs to the methyltransferase superfamily. tRNA (adenine-N(6)-)-methyltransferase family.

Its subcellular location is the cytoplasm. It catalyses the reaction adenosine(37) in tRNA1(Val) + S-adenosyl-L-methionine = N(6)-methyladenosine(37) in tRNA1(Val) + S-adenosyl-L-homocysteine + H(+). In terms of biological role, specifically methylates the adenine in position 37 of tRNA(1)(Val) (anticodon cmo5UAC). This chain is tRNA1(Val) (adenine(37)-N6)-methyltransferase, found in Glaesserella parasuis serovar 5 (strain SH0165) (Haemophilus parasuis).